Consider the following 596-residue polypeptide: Cell adhesion molecule CEACAM20 (596 aa).

The signal sequence occupies residues Met-1–Ala-30. At Gln-31–Gly-450 the chain is on the extracellular side. Ig-like C2-type domains lie at Pro-58 to Leu-154, Pro-160 to Lys-246, Pro-256 to Thr-341, and Pro-346 to Leu-432. Residues Cys-90 and Cys-138 are joined by a disulfide bond. N-linked (GlcNAc...) asparagine glycosylation is found at Asn-96 and Asn-105. An intrachain disulfide couples Cys-276 to Cys-324. Asn-280, Asn-306, Asn-317, Asn-368, and Asn-415 each carry an N-linked (GlcNAc...) asparagine glycan. An intrachain disulfide couples Cys-375 to Cys-416. A helical membrane pass occupies residues Ile-451–Ile-471. At Arg-472–Glu-585 the chain is on the cytoplasmic side. Disordered regions lie at residues Pro-477 to Glu-510 and Gln-527 to Pro-563. Residues Glu-501–Glu-510 are compositionally biased toward low complexity. The span at Trp-553 to Pro-562 shows a compositional bias: pro residues. Phosphotyrosine occurs at positions 578 and 589.

The protein belongs to the immunoglobulin superfamily. CEA family. As to quaternary structure, interacts (via extracellular domain) with PTPRH (via extracellular domain); the interaction dephosphorylates CEACAM20. Interacts (phosphorylated form) with SYK (via SH2 domains); the interaction further enhances CEACAM20 phosphorylation. Phosphorylated on tyrosine residues by SYK, SRC and FYN in vitro.

It localises to the cell projection. It is found in the microvillus membrane. The protein resides in the apical cell membrane. In terms of biological role, together with the tyrosine-protein kinase SYK, enhances production of the cytokine CXCL8/IL-8 via the NFKB pathway and may thus have a role in the intestinal immune response. This Homo sapiens (Human) protein is Cell adhesion molecule CEACAM20.